Here is a 736-residue protein sequence, read N- to C-terminus: 1,4-alpha-glucan branching enzyme GlgB (736 aa).

The Nucleophile role is filled by Asp-415. Glu-468 acts as the Proton donor in catalysis.

The protein belongs to the glycosyl hydrolase 13 family. GlgB subfamily. As to quaternary structure, monomer.

It catalyses the reaction Transfers a segment of a (1-&gt;4)-alpha-D-glucan chain to a primary hydroxy group in a similar glucan chain.. It functions in the pathway glycan biosynthesis; glycogen biosynthesis. Its function is as follows. Catalyzes the formation of the alpha-1,6-glucosidic linkages in glycogen by scission of a 1,4-alpha-linked oligosaccharide from growing alpha-1,4-glucan chains and the subsequent attachment of the oligosaccharide to the alpha-1,6 position. This Rhodopirellula baltica (strain DSM 10527 / NCIMB 13988 / SH1) protein is 1,4-alpha-glucan branching enzyme GlgB.